A 272-amino-acid chain; its full sequence is Phosphate import ATP-binding protein PstB (272 aa).

The region spanning 26–267 is the ABC transporter domain; it reads LEIRNLDLSY…PRKRKTEDYI (242 aa). Residue 58–65 participates in ATP binding; that stretch reads GPSGCGKS.

Belongs to the ABC transporter superfamily. Phosphate importer (TC 3.A.1.7) family. As to quaternary structure, the complex is composed of two ATP-binding proteins (PstB), two transmembrane proteins (PstC and PstA) and a solute-binding protein (PstS).

It localises to the cell inner membrane. The catalysed reaction is phosphate(out) + ATP + H2O = ADP + 2 phosphate(in) + H(+). Part of the ABC transporter complex PstSACB involved in phosphate import. Responsible for energy coupling to the transport system. The chain is Phosphate import ATP-binding protein PstB from Shewanella denitrificans (strain OS217 / ATCC BAA-1090 / DSM 15013).